We begin with the raw amino-acid sequence, 525 residues long: Chromosomal replication initiator protein DnaA (525 aa).

The domain I, interacts with DnaA modulators stretch occupies residues 1-71; that stretch reads MNDFWQHCSA…SDLAREFWNT (71 aa). The segment at 71-188 is domain II; it reads TPIEVQFVLD…GEADSMYERS (118 aa). Positions 162–182 are disordered; that stretch reads AGRRTWRPGPGAAPANGGEAD. Residues 169–181 show a composition bias toward low complexity; it reads PGPGAAPANGGEA. The segment at 189 to 405 is domain III, AAA+ region; the sequence is KLNPVLTFDN…GALRKILAYS (217 aa). ATP contacts are provided by glycine 233, glycine 235, lysine 236, and threonine 237. The segment at 406 to 525 is domain IV, binds dsDNA; sequence KFHGREISIE…LHVLEQTLKG (120 aa).

The protein belongs to the DnaA family. Oligomerizes as a right-handed, spiral filament on DNA at oriC.

It is found in the cytoplasm. Functionally, plays an essential role in the initiation and regulation of chromosomal replication. ATP-DnaA binds to the origin of replication (oriC) to initiate formation of the DNA replication initiation complex once per cell cycle. Binds the DnaA box (a 9 base pair repeat at the origin) and separates the double-stranded (ds)DNA. Forms a right-handed helical filament on oriC DNA; dsDNA binds to the exterior of the filament while single-stranded (ss)DNA is stabiized in the filament's interior. The ATP-DnaA-oriC complex binds and stabilizes one strand of the AT-rich DNA unwinding element (DUE), permitting loading of DNA polymerase. After initiation quickly degrades to an ADP-DnaA complex that is not apt for DNA replication. Binds acidic phospholipids. The polypeptide is Chromosomal replication initiator protein DnaA (Burkholderia cenocepacia (strain HI2424)).